The chain runs to 120 residues: Large ribosomal subunit protein uL18 (120 aa).

It belongs to the universal ribosomal protein uL18 family. As to quaternary structure, part of the 50S ribosomal subunit; part of the 5S rRNA/L5/L18/L25 subcomplex. Contacts the 5S and 23S rRNAs.

Functionally, this is one of the proteins that bind and probably mediate the attachment of the 5S RNA into the large ribosomal subunit, where it forms part of the central protuberance. The polypeptide is Large ribosomal subunit protein uL18 (Bradyrhizobium sp. (strain BTAi1 / ATCC BAA-1182)).